We begin with the raw amino-acid sequence, 1128 residues long: Inactive phospholipase C-like protein 2 (1128 aa).

The disordered stretch occupies residues 1–129 (MAECGRGAAG…KKTVSFSSMP (129 aa)). N-acetylalanine is present on alanine 2. At serine 16 the chain carries Phosphoserine. Positions 20–30 (ALGAKGALKAG) are enriched in low complexity. Residues 31-43 (AGEGGGGGGGGRL) are compositionally biased toward gly residues. The residue at position 85 (threonine 85) is a Phosphothreonine. The PH domain occupies 142-252 (NSMVEGSELK…WVTGLRYLIS (111 aa)). The PI-PLC X-box domain occupies 427-571 (QDMKQPLSHY…LKGKILIKAK (145 aa)). Phosphothreonine is present on threonine 585. The 117-residue stretch at 619 to 735 (LSELVSICKS…GYVLRPAIMR (117 aa)) folds into the PI-PLC Y-box domain. The region spanning 735–864 (REEVSFFSAN…TGYRHVPLQS (130 aa)) is the C2 domain. Residues 1100 to 1128 (KPGTENSEAQKPRRSLEAIPEKASDENGD) form a disordered region. Positions 1107-1128 (EAQKPRRSLEAIPEKASDENGD) are enriched in basic and acidic residues. Serine 1114 carries the post-translational modification Phosphoserine.

As to expression, ubiquitously expressed, with a strong expression in skeletal muscle.

The protein localises to the cytoplasm. Functionally, may play an role in the regulation of Ins(1,4,5)P3 around the endoplasmic reticulum. The polypeptide is Inactive phospholipase C-like protein 2 (Plcl2) (Mus musculus (Mouse)).